The following is a 415-amino-acid chain: Homoserine O-succinyltransferase (415 aa).

An AB hydrolase-1 domain is found at 69–383 (NAVLVCHALN…PHGHDAFLLD (315 aa)). The active-site Nucleophile is the serine 175. Arginine 245 lines the substrate pocket. Residues aspartate 344 and histidine 377 contribute to the active site. Aspartate 378 serves as a coordination point for substrate.

The protein belongs to the AB hydrolase superfamily. MetX family. As to quaternary structure, homodimer.

It localises to the cytoplasm. It carries out the reaction L-homoserine + succinyl-CoA = O-succinyl-L-homoserine + CoA. It functions in the pathway amino-acid biosynthesis; L-methionine biosynthesis via de novo pathway; O-succinyl-L-homoserine from L-homoserine: step 1/1. Its function is as follows. Transfers a succinyl group from succinyl-CoA to L-homoserine, forming succinyl-L-homoserine. This chain is Homoserine O-succinyltransferase, found in Bordetella parapertussis (strain 12822 / ATCC BAA-587 / NCTC 13253).